Here is a 350-residue protein sequence, read N- to C-terminus: Bifunctional methylenetetrahydrofolate dehydrogenase/cyclohydrolase, mitochondrial (350 aa).

The N-terminal 35 residues, 1–35, are a transit peptide targeting the mitochondrion; sequence MAATSLMSALAARLLQPAHSCSLRLRPFHLAAVRN. Lys-50 bears the N6-acetyllysine; alternate mark. A Glycyl lysine isopeptide (Lys-Gly) (interchain with G-Cter in SUMO2); alternate cross-link involves residue Lys-50. Residues 84-88 and 131-133 each bind substrate; these read YVLNK and VQL. NAD(+) contacts are provided by residues 200-202 and Arg-233; that span reads GRS. Position 309-313 (309-313) interacts with substrate; the sequence is PGGVG.

Belongs to the tetrahydrofolate dehydrogenase/cyclohydrolase family. Homodimer. It depends on Mg(2+) as a cofactor.

The protein resides in the mitochondrion. The catalysed reaction is (6R)-5,10-methylene-5,6,7,8-tetrahydrofolate + NAD(+) = (6R)-5,10-methenyltetrahydrofolate + NADH. It carries out the reaction (6R)-5,10-methenyltetrahydrofolate + H2O = (6R)-10-formyltetrahydrofolate + H(+). Its function is as follows. Although its dehydrogenase activity is NAD-specific, it can also utilize NADP at a reduced efficiency. The polypeptide is Bifunctional methylenetetrahydrofolate dehydrogenase/cyclohydrolase, mitochondrial (MTHFD2) (Homo sapiens (Human)).